Reading from the N-terminus, the 161-residue chain is Zinc finger A20 and AN1 domain-containing stress-associated protein 4 (161 aa).

The A20-type zinc finger occupies 10 to 44 (PEGHRLCVNNCGFFGSSATMNLCSNCYGDLCLKQQ). C16, C20, C32, and C35 together coordinate Zn(2+). Positions 76–85 (TTKKTEEKKP) are enriched in basic and acidic residues. A disordered region spans residues 76 to 99 (TTKKTEEKKPIQIPTEQPSPPQRP). The AN1-type zinc-finger motif lies at 96–142 (PQRPNRCTVCRKRVGLTGFMCRCGTTFCGSHRYPEVHGCTFDFKSAG). Residues C102, C105, C116, C118, C123, H126, H132, and C134 each contribute to the Zn(2+) site.

May be involved in environmental stress response. The protein is Zinc finger A20 and AN1 domain-containing stress-associated protein 4 (SAP4) of Arabidopsis thaliana (Mouse-ear cress).